We begin with the raw amino-acid sequence, 975 residues long: Cation-chloride cotransporter 1 (975 aa).

Disordered stretches follow at residues 1-29 (MDSG…SKYR) and 104-124 (EQIQ…TQGH). Over 1 to 132 (MDSGDIEEAG…GHPKPPALKM (132 aa)) the chain is Cytoplasmic. Residues 133–153 (GTMMGVFVPCLQNILGIIYYI) traverse the membrane as a helical segment. The Extracellular segment spans residues 154-167 (RFTWIVGMAGIGQG). Residues 168–188 (LVLVFLCGLCTFLTTISLSAI) traverse the membrane as a helical segment. The Cytoplasmic segment spans residues 189–214 (ATNGAMKGGGPYYLIGRALGPEVGIS). A helical membrane pass occupies residues 215-235 (IGLCFFLGNAVAGALYVLGAV). At 236-273 (ETFLKAFPAAGIFRETITKVNGTAVSESIQSPNSHDLQ) the chain is on the extracellular side. N-linked (GlcNAc...) asparagine glycosylation is present at Asn256. Residues 274–294 (VYGIVVTILLCFIVFGGVKMI) form a helical membrane-spanning segment. At 295–296 (NR) the chain is on the cytoplasmic side. The chain crosses the membrane as a helical span at residues 297-317 (VAPAFLVPVLLSIFCIFIGIF). At 318 to 359 (LAKTDDPDNGITGLRLKSFKDNWGSAYQMTNDAGIPDPTGGT) the chain is on the extracellular side. Residues 360-380 (YWSFNELVGLFFPAVTGIMAG) form a helical membrane-spanning segment. Residues 381 to 398 (SNRSASLKDTQKSIPVGT) lie on the Cytoplasmic side of the membrane. Residues 399 to 419 (LAATLTTTSLYLISVLFFGAV) form a helical membrane-spanning segment. The Extracellular portion of the chain corresponds to 420-434 (ATRDKLLTDRLLTAT). Residues 435-455 (IAWPFPAIVHVGIILSTLGAA) traverse the membrane as a helical segment. Residues 456–490 (LQSLTGAPRLLAAIANDDILPILNYFKVADTSEPH) lie on the Cytoplasmic side of the membrane. A helical membrane pass occupies residues 491–511 (IATLFTAFICIGCVVIGNLDL). Topologically, residues 512-515 (ITPT) are extracellular. Residues 516 to 536 (VTMFYLLCYSGVNLSCFLLDL) form a helical membrane-spanning segment. The Cytoplasmic segment spans residues 537 to 544 (LDAPSWRP). Residues 545–565 (RWKYHHWSLSFVGASLCIVIM) form a helical membrane-spanning segment. Residues 566–571 (FLISWS) are Extracellular-facing. A helical transmembrane segment spans residues 572 to 592 (FTVVAIALASLIYKYVGLKGK). The Cytoplasmic portion of the chain corresponds to 593–975 (AGDWGDGFKS…YHRDVVTLFT (383 aa)).

Belongs to the SLC12A transporter family. As to expression, expressed in young seedlings cotyledon tips, plant vasculature, root tips and axillary buds. Expressed in root vascular strand in the pericycle and other parenchyma cells bordering xylem vessels. Expressed in the xylem/symplast boundaries of rosette stems, rosette leaves and cauline leaves. Expressed in stipules, trichomes and hydathodes. Expressed in pollen grains.

The protein localises to the membrane. Its function is as follows. Cation/chloride cotransporter that mediates potassium-chloride and sodium-chloride cotransports. Involved in plant development and Cl(-) homeostasis. May be involved in long distance Cl(-) transport. Does not function as an H(+)-dependent cotransporter. The chain is Cation-chloride cotransporter 1 (CCC1) from Arabidopsis thaliana (Mouse-ear cress).